The chain runs to 562 residues: Potassium-transporting ATPase potassium-binding subunit (562 aa).

Transmembrane regions (helical) follow at residues Phe6 to Phe26, Ala63 to Met83, Gly132 to Ile152, Leu175 to Leu195, Phe253 to Val273, Leu283 to Leu303, Phe327 to Val347, Ala356 to Val376, Gly379 to Gly399, Met416 to Leu436, Leu483 to Ile503, and Leu526 to Ala546.

The protein belongs to the KdpA family. The system is composed of three essential subunits: KdpA, KdpB and KdpC.

The protein localises to the cell inner membrane. Part of the high-affinity ATP-driven potassium transport (or Kdp) system, which catalyzes the hydrolysis of ATP coupled with the electrogenic transport of potassium into the cytoplasm. This subunit binds the periplasmic potassium ions and delivers the ions to the membrane domain of KdpB through an intramembrane tunnel. This Yersinia enterocolitica serotype O:8 / biotype 1B (strain NCTC 13174 / 8081) protein is Potassium-transporting ATPase potassium-binding subunit.